The chain runs to 907 residues: Translation initiation factor IF-2 (907 aa).

Residues 26–317 form a disordered region; it reads DAGMKKSSSD…KPKSMQHGFD (292 aa). Basic and acidic residues-rich tracts occupy residues 28 to 44 and 101 to 248; these read GMKK…EKQK and SAIE…DTDY. The segment covering 299-308 has biased composition (basic residues); the sequence is KGGRKGKLSK. Residues 406 to 575 enclose the tr-type G domain; that stretch reads PRAPVVTIMG…LLQAEVLELT (170 aa). Residues 415–422 are G1; that stretch reads GHVDHGKT. GTP is bound at residue 415-422; sequence GHVDHGKT. The tract at residues 440 to 444 is G2; the sequence is GITQH. Positions 461–464 are G3; sequence DTPG. Residues 461–465 and 515–518 contribute to the GTP site; these read DTPGH and NKID. Residues 515–518 form a G4 region; sequence NKID. The interval 551-553 is G5; the sequence is SAK.

Belongs to the TRAFAC class translation factor GTPase superfamily. Classic translation factor GTPase family. IF-2 subfamily.

It is found in the cytoplasm. One of the essential components for the initiation of protein synthesis. Protects formylmethionyl-tRNA from spontaneous hydrolysis and promotes its binding to the 30S ribosomal subunits. Also involved in the hydrolysis of GTP during the formation of the 70S ribosomal complex. The chain is Translation initiation factor IF-2 from Vibrio vulnificus (strain CMCP6).